A 312-amino-acid chain; its full sequence is DNA-directed RNA polymerase subunit alpha (312 aa).

Positions methionine 1 to threonine 226 are alpha N-terminal domain (alpha-NTD). Residues lysine 243–aspartate 312 form an alpha C-terminal domain (alpha-CTD) region.

It belongs to the RNA polymerase alpha chain family. As to quaternary structure, homodimer. The RNAP catalytic core consists of 2 alpha, 1 beta, 1 beta' and 1 omega subunit. When a sigma factor is associated with the core the holoenzyme is formed, which can initiate transcription.

It catalyses the reaction RNA(n) + a ribonucleoside 5'-triphosphate = RNA(n+1) + diphosphate. DNA-dependent RNA polymerase catalyzes the transcription of DNA into RNA using the four ribonucleoside triphosphates as substrates. This is DNA-directed RNA polymerase subunit alpha from Lacticaseibacillus casei (strain BL23) (Lactobacillus casei).